The chain runs to 316 residues: Glycerol-3-phosphate dehydrogenase [NAD(P)+] (316 aa).

NADPH-binding residues include S14, F15, R35, and K109. Sn-glycerol 3-phosphate-binding residues include K109 and G137. Residue A141 coordinates NADPH. Sn-glycerol 3-phosphate-binding residues include K192, D248, S258, R259, and N260. Catalysis depends on K192, which acts as the Proton acceptor. R259 lines the NADPH pocket. Residues L283 and E285 each coordinate NADPH.

Belongs to the NAD-dependent glycerol-3-phosphate dehydrogenase family.

It localises to the cytoplasm. It carries out the reaction sn-glycerol 3-phosphate + NAD(+) = dihydroxyacetone phosphate + NADH + H(+). It catalyses the reaction sn-glycerol 3-phosphate + NADP(+) = dihydroxyacetone phosphate + NADPH + H(+). The protein operates within membrane lipid metabolism; glycerophospholipid metabolism. Catalyzes the reduction of the glycolytic intermediate dihydroxyacetone phosphate (DHAP) to sn-glycerol 3-phosphate (G3P), the key precursor for phospholipid synthesis. In Rickettsia prowazekii (strain Madrid E), this protein is Glycerol-3-phosphate dehydrogenase [NAD(P)+].